A 225-amino-acid chain; its full sequence is NAD(P)H-quinone oxidoreductase subunit K, chloroplastic (225 aa).

Cysteine 43, cysteine 44, cysteine 108, and cysteine 139 together coordinate [4Fe-4S] cluster.

Belongs to the complex I 20 kDa subunit family. In terms of assembly, NDH is composed of at least 16 different subunits, 5 of which are encoded in the nucleus. Requires [4Fe-4S] cluster as cofactor.

Its subcellular location is the plastid. It localises to the chloroplast thylakoid membrane. It catalyses the reaction a plastoquinone + NADH + (n+1) H(+)(in) = a plastoquinol + NAD(+) + n H(+)(out). The catalysed reaction is a plastoquinone + NADPH + (n+1) H(+)(in) = a plastoquinol + NADP(+) + n H(+)(out). NDH shuttles electrons from NAD(P)H:plastoquinone, via FMN and iron-sulfur (Fe-S) centers, to quinones in the photosynthetic chain and possibly in a chloroplast respiratory chain. The immediate electron acceptor for the enzyme in this species is believed to be plastoquinone. Couples the redox reaction to proton translocation, and thus conserves the redox energy in a proton gradient. The chain is NAD(P)H-quinone oxidoreductase subunit K, chloroplastic from Arabis hirsuta (Hairy rock-cress).